The sequence spans 129 residues: Large ribosomal subunit protein bL12 (129 aa).

It belongs to the bacterial ribosomal protein bL12 family. Homodimer. Part of the ribosomal stalk of the 50S ribosomal subunit. Forms a multimeric L10(L12)X complex, where L10 forms an elongated spine to which 2 to 4 L12 dimers bind in a sequential fashion. Binds GTP-bound translation factors.

Its function is as follows. Forms part of the ribosomal stalk which helps the ribosome interact with GTP-bound translation factors. Is thus essential for accurate translation. The polypeptide is Large ribosomal subunit protein bL12 (Solidesulfovibrio magneticus (strain ATCC 700980 / DSM 13731 / RS-1) (Desulfovibrio magneticus)).